The sequence spans 478 residues: V-type ATP synthase beta chain (478 aa).

Belongs to the ATPase alpha/beta chains family.

Functionally, produces ATP from ADP in the presence of a proton gradient across the membrane. The V-type beta chain is a regulatory subunit. This is V-type ATP synthase beta chain from Thermus thermophilus (strain ATCC BAA-163 / DSM 7039 / HB27).